The following is a 350-amino-acid chain: THUMP domain-containing protein 1 (350 aa).

Polar residues predominate over residues 1 to 10; sequence MATTAQQSPQ. Disordered regions lie at residues 1–42 and 75–96; these read MATT…LEPG and PEKF…DDAE. Ala2 carries the N-acetylalanine modification. Phosphoserine is present on residues Ser8, Ser86, Ser88, and Ser119. A THUMP domain is found at 147–254; that stretch reads DMYKTKKKKT…KAVCCLSVVK (108 aa). Ser270 carries the post-translational modification Phosphoserine. The segment covering 270–292 has biased composition (basic and acidic residues); sequence SAKDSQPHPKLGNGKEAKLEPDS. Residues 270-350 form a disordered region; it reads SAKDSQPHPK…VPKTNENELS (81 aa).

This sequence belongs to the THUMPD1 family. Interacts with NAT10. Binds tRNA.

In terms of biological role, functions as a tRNA-binding adapter to mediate NAT10-dependent tRNA acetylation modifying cytidine to N4-acetylcytidine (ac4C). This Mus musculus (Mouse) protein is THUMP domain-containing protein 1 (Thumpd1).